Here is a 354-residue protein sequence, read N- to C-terminus: Galactoside alpha-(1,2)-fucosyltransferase 2 (354 aa).

The Cytoplasmic segment spans residues 1-5; it reads MASAQ. The chain crosses the membrane as a helical; Signal-anchor for type II membrane protein span at residues 6-26; the sequence is VPFSFPLAHFLIFVFVTSTIT. At 27-354 the chain is on the lumenal side; the sequence is HLQQRIVKLQ…PADLSPLLKH (328 aa). Residues 43–68 form a disordered region; sequence LPMTTQMSSGNTESPEMRRDSEQHGN. The span at 45 to 56 shows a compositional bias: polar residues; sequence MTTQMSSGNTES. The segment covering 57–68 has biased composition (basic and acidic residues); the sequence is PEMRRDSEQHGN. Asn199 carries an N-linked (GlcNAc...) asparagine glycan.

Belongs to the glycosyltransferase 11 family. In terms of tissue distribution, specifically expressed in gut.

It is found in the golgi apparatus. Its subcellular location is the golgi stack membrane. It catalyses the reaction a beta-D-galactosyl-(1-&gt;3)-N-acetyl-beta-D-glucosaminyl derivative + GDP-beta-L-fucose = an alpha-L-Fuc-(1-&gt;2)-beta-D-Gal-(1-&gt;3)-beta-D-GlcNAc derivative + GDP + H(+). The enzyme catalyses a beta-D-galactosyl-(1-&gt;4)-N-acetyl-beta-D-glucosaminyl derivative + GDP-beta-L-fucose = an alpha-L-Fuc-(1-&gt;2)-beta-D-Gal-(1-&gt;4)-beta-D-GlcNAc derivative + GDP + H(+). It carries out the reaction a ganglioside GM1 (d18:1(4E)) + GDP-beta-L-fucose = a ganglioside Fuc-GM1 (d18:1(4E)) + GDP + H(+). The catalysed reaction is a globoside GalGb4Cer (d18:1(4E)) + GDP-beta-L-fucose = a globoside Globo-H (d18:1(4E)) + GDP + H(+). It catalyses the reaction a neolactoside nLc4Cer + GDP-beta-L-fucose = a neolactoside IV(2)-alpha-Fuc-nLc4Cer + GDP + H(+). The enzyme catalyses a neolactoside nLc4Cer(d18:1(4E)) + GDP-beta-L-fucose = a neolactoside IV(2)-alpha-Fuc-nLc4Cer(d18:1(4E)) + GDP + H(+). It carries out the reaction a ganglioside GM1 + GDP-beta-L-fucose = a ganglioside Fuc-GM1 + GDP + H(+). The catalysed reaction is a ganglioside GA1 + GDP-beta-L-fucose = a ganglioside Fuc-GA1 + GDP + H(+). It catalyses the reaction Lc4Cer + GDP-beta-L-fucose = alpha-L-fucosyl-(1-&gt;2)-beta-D-galactosyl-(1-&gt;3)-N-acetyl-beta-D-glucosaminyl-(1-&gt;3)-beta-D-galactosyl-(1-&gt;4)-beta-D-glucosyl-(1&lt;-&gt;1')-ceramide + GDP + H(+). The enzyme catalyses a beta-D-Gal-(1-&gt;3)-beta-D-GlcNAc-(1-&gt;3)-beta-D-Gal-(1-&gt;4)-beta-D-Glc-(1&lt;-&gt;1')-Cer(d18:1(4E)) + GDP-beta-L-fucose = alpha-L-fucosyl-(1-&gt;2)- beta-D-galactosyl-(1-&gt;3)-N-acetyl-beta-D-glucosaminyl-(1-&gt;3)-beta-D-galactosyl-(1-&gt;4)-beta-D-glucosyl-(1&lt;-&gt;1')-N-acylsphing-4-enine + GDP + H(+). It carries out the reaction a ganglioside GD1b + GDP-beta-L-fucose = a ganglioside Fuc-GD1b + GDP + H(+). The catalysed reaction is a lactoside III(4)-a-Fuc-Lc4Cer + GDP-beta-L-fucose = a lactoside IV(2),III(4)-a-[Fuc]2-Lc4Cer + GDP + H(+). It catalyses the reaction beta-D-galactosyl-(1-&gt;3)-N-acetyl-D-galactosamine + GDP-beta-L-fucose = alpha-L-fucosyl-(1-&gt;2)-beta-D-galactosyl-(1-&gt;3)-N-acetyl-D-galactosamine + GDP + H(+). Its pathway is protein modification; protein glycosylation. Catalyzes the transfer of L-fucose, from a guanosine diphosphate-beta-L-fucose, to the terminal galactose on both O- and N-linked glycans chains of cell surface glycoproteins and glycolipids and the resulting epitope regulates several processes such as cell-cell interaction including host-microbe interaction, cell surface expression and cell proliferation. Preferentially fucosylates gangliosides GA1 and GM1 in the antrum, cecum and colon and in the female reproductive organs. Fucosylated host glycoproteins or glycolipids mediate interaction with intestinal microbiota influencing its composition. Creates a soluble precursor oligosaccharide FuC-alpha ((1,2)Galbeta-) called the H antigen which is an essential substrate for the final step in the soluble ABO blood group antigen synthesis pathway. In Rattus norvegicus (Rat), this protein is Galactoside alpha-(1,2)-fucosyltransferase 2.